The following is a 566-amino-acid chain: Proline--tRNA ligase 1 (566 aa).

It belongs to the class-II aminoacyl-tRNA synthetase family. ProS type 1 subfamily. In terms of assembly, homodimer.

It localises to the cytoplasm. It catalyses the reaction tRNA(Pro) + L-proline + ATP = L-prolyl-tRNA(Pro) + AMP + diphosphate. Catalyzes the attachment of proline to tRNA(Pro) in a two-step reaction: proline is first activated by ATP to form Pro-AMP and then transferred to the acceptor end of tRNA(Pro). As ProRS can inadvertently accommodate and process non-cognate amino acids such as alanine and cysteine, to avoid such errors it has two additional distinct editing activities against alanine. One activity is designated as 'pretransfer' editing and involves the tRNA(Pro)-independent hydrolysis of activated Ala-AMP. The other activity is designated 'posttransfer' editing and involves deacylation of mischarged Ala-tRNA(Pro). The misacylated Cys-tRNA(Pro) is not edited by ProRS. This chain is Proline--tRNA ligase 1, found in Bacillus cereus (strain ATCC 14579 / DSM 31 / CCUG 7414 / JCM 2152 / NBRC 15305 / NCIMB 9373 / NCTC 2599 / NRRL B-3711).